The primary structure comprises 617 residues: Thioredoxin reductase (617 aa).

FAD is bound by residues 127–128 (PG), 147–150 (DYVK), 163–164 (TC), 168–172 (GCVPK), Ala-237, Asp-433, and 440–442 (ELA). Cysteines 164 and 169 form a disulfide. A loop important for the interaction with TRX1 region spans residues 514 to 528 (HRQKHIRAQKDEYDL). Residue His-585 coordinates FAD. Catalysis depends on His-585, which acts as the Proton acceptor. Residues Cys-611 and Cys-616 are joined by a disulfide bond.

This sequence belongs to the class-I pyridine nucleotide-disulfide oxidoreductase family. Homodimer. The cofactor is FAD.

Its subcellular location is the mitochondrion. It localises to the cytoplasm. The enzyme catalyses [thioredoxin]-dithiol + NADP(+) = [thioredoxin]-disulfide + NADPH + H(+). In terms of biological role, catalyzes the transfer of electrons from NADPH to thioredoxins TRX1, TRX2 and TRX3, which in turn act as reductants of disulfide containing proteins. Able to reduce nitroglutathione (GSNO), a compound involved in the transport of nitric oxide (NO); however, TRX1 is more efficient in reducing GSNO. Has no catalytic activity towards oxidized glutathione (GSSG). The protein is Thioredoxin reductase of Plasmodium falciparum (isolate 3D7).